Reading from the N-terminus, the 170-residue chain is Interferon gamma (170 aa).

The first 20 residues, 1–20 (MNSRLCIMALLLCFSQALLG), serve as a signal peptide directing secretion. 2 N-linked (GlcNAc...) asparagine glycosylation sites follow: N36 and N103.

The protein belongs to the type II (or gamma) interferon family. Homodimer. Interacts with IFNGR1 (via extracellular domain); this interaction promotes IFNGR1 dimerization. In terms of tissue distribution, released primarily from activated T lymphocytes.

It is found in the secreted. Its function is as follows. Type II interferon produced by immune cells such as T-cells and NK cells that plays crucial roles in antimicrobial, antiviral, and antitumor responses by activating effector immune cells and enhancing antigen presentation. Primarily signals through the JAK-STAT pathway after interaction with its receptor IFNGR1 to affect gene regulation. Upon IFNG binding, IFNGR1 intracellular domain opens out to allow association of downstream signaling components JAK2, JAK1 and STAT1, leading to STAT1 activation, nuclear translocation and transcription of IFNG-regulated genes. Many of the induced genes are transcription factors such as IRF1 that are able to further drive regulation of a next wave of transcription. Plays a role in class I antigen presentation pathway by inducing a replacement of catalytic proteasome subunits with immunoproteasome subunits. In turn, increases the quantity, quality, and repertoire of peptides for class I MHC loading. Increases the efficiency of peptide generation also by inducing the expression of activator PA28 that associates with the proteasome and alters its proteolytic cleavage preference. Up-regulates as well MHC II complexes on the cell surface by promoting expression of several key molecules such as cathepsins B/CTSB, H/CTSH, and L/CTSL. Participates in the regulation of hematopoietic stem cells during development and under homeostatic conditions by affecting their development, quiescence, and differentiation. This chain is Interferon gamma (IFNG), found in Sigmodon hispidus (Hispid cotton rat).